A 312-amino-acid polypeptide reads, in one-letter code: Prephenate dehydratase (312 aa).

One can recognise a Prephenate dehydratase domain in the interval 3–194 (GIAYLGPEGT…ARTRFVLVGR (192 aa)). Residues 208-285 (SVVLQLDNVP…ADVRYLGSWP (78 aa)) enclose the ACT domain. The disordered stretch occupies residues 291–312 (GAAPPPMDESASWLEGLREGRP).

Homodimer.

It catalyses the reaction prephenate + H(+) = 3-phenylpyruvate + CO2 + H2O. It functions in the pathway amino-acid biosynthesis; L-phenylalanine biosynthesis; phenylpyruvate from prephenate: step 1/1. This chain is Prephenate dehydratase (pheA), found in Mycolicibacterium vanbaalenii (strain DSM 7251 / JCM 13017 / BCRC 16820 / KCTC 9966 / NRRL B-24157 / PYR-1) (Mycobacterium vanbaalenii).